Reading from the N-terminus, the 172-residue chain is Adenine phosphoribosyltransferase (172 aa).

It belongs to the purine/pyrimidine phosphoribosyltransferase family. Homodimer.

Its subcellular location is the cytoplasm. The enzyme catalyses AMP + diphosphate = 5-phospho-alpha-D-ribose 1-diphosphate + adenine. It functions in the pathway purine metabolism; AMP biosynthesis via salvage pathway; AMP from adenine: step 1/1. Its function is as follows. Catalyzes a salvage reaction resulting in the formation of AMP, that is energically less costly than de novo synthesis. This is Adenine phosphoribosyltransferase from Pelobacter propionicus (strain DSM 2379 / NBRC 103807 / OttBd1).